The chain runs to 677 residues: Polyunsaturated fatty acid lipoxygenase ALOX15B (677 aa).

The PLAT domain maps to 2–125 (AKFRVRVSTG…ELVLREGAAK (124 aa)). Positions 15, 17, 39, 40, 42, 44, 86, and 87 each coordinate Ca(2+). One can recognise a Lipoxygenase domain in the interval 126 to 677 (VSWQDHHRTL…PPLIENSVSI (552 aa)). Residues His374, His379, His554, and Ile677 each contribute to the Fe cation site.

This sequence belongs to the lipoxygenase family. It depends on Fe cation as a cofactor.

It is found in the cytoplasm. The protein resides in the cytosol. The protein localises to the cell membrane. It localises to the cytoskeleton. Its subcellular location is the membrane. It is found in the cell junction. The protein resides in the adherens junction. The protein localises to the focal adhesion. It localises to the nucleus. It catalyses the reaction (5Z,8Z,11Z,14Z)-eicosatetraenoate + O2 = (15S)-hydroperoxy-(5Z,8Z,11Z,13E)-eicosatetraenoate. It carries out the reaction (9Z,12Z)-octadecadienoate + O2 = 13-hydroperoxy-(9Z,11E)-octadecadienoate. The enzyme catalyses (5S)-hydroxy-(6E,8Z,11Z,14Z)-eicosatetraenoate + O2 = (5S)-hydroxy-(15S)-hydroperoxy-(6E,8Z,11Z,13E)-eicosatetraenoate. The catalysed reaction is (5Z,8Z,11Z,14Z)-eicosatetraenoate + O2 = 5-hydroperoxy-(6E,8Z,11Z,14Z)-eicosatetraenoate. It catalyses the reaction (5S,6R)-dihydroxy-(7E,9E,11Z,14Z)-eicosatetraenoate + O2 = (5S,6R)-dihydroxy-(15S)-hydroperoxy-(7E,9E,11Z,13E)-eicosatetraenoate. It carries out the reaction (5S)-hydroperoxy-(6E,8Z,11Z,14Z)-eicosatetraenoate + O2 = (5S,15S)-dihydroperoxy-(6E,8Z,11Z,13E)-eicosatetraenoate. The enzyme catalyses 2-(5Z,8Z,11Z,14Z-eicosatetraenoyl)-glycerol + O2 = 2-[15(S)-hydroperoxy-(5Z,8Z,11Z,13E)-eicosatetraenoyl]-glycerol. The catalysed reaction is (8S)-hydroperoxy-(5Z,9E,11Z,14Z)-eicosatetraenoate + O2 = (8S,15S)-dihydroperoxy-(5Z,9E,11Z,13E)-eicosatetraenoate. It catalyses the reaction N-(5Z,8Z,11Z,14Z)-eicosatetraenoyl-L-alanine + O2 = N-(15S)-hydroperoxy-(5Z,8Z,11Z,13E)-eicosatetraenoyl-alanine. It carries out the reaction N-(5Z,8Z,11Z,14Z)-eicosatetraenoyl-gamma-aminobutanoate + O2 = N-(15S)-hydroperoxy-(5Z,8Z,11Z,13E)-eicosatetraenoyl-gamma-aminobutanoate. The enzyme catalyses N-(5Z,8Z,11Z,14Z)-eicosatetraenoyl-glycine + O2 = N-(15S)-hydroperoxy-(5Z,8Z,11Z,13E)-eicosatetraenoyl-glycine. The catalysed reaction is N-(5Z,8Z,11Z,14Z)-eicosatetraenoyl-taurine + O2 = N-(15S)-hydroperoxy-(5Z,8Z,11Z,13E)-eicosatetraenoyl-taurine. It catalyses the reaction 2-(5Z,8Z,11Z,14Z-eicosatetraenoyl)-glycerol + O2 = 2-[12-hydroperoxy-(5Z,8Z,10E,14Z)-eicosatetraenoyl]-glycerol. It carries out the reaction 1-octadecanoyl-2-(5Z,8Z,11Z,14Z-eicosatetraenoyl)-sn-glycero-3-phosphocholine + O2 = 1-octadecanoyl-2-(15-hydroperoxy-5Z,8Z,11Z,13E-eicosatetraenoyl)-sn-glycero-3-phosphocholine. The enzyme catalyses a 1-acyl-2-(5Z,8Z,11Z,14Z-eicosatetraenoyl)-sn-glycero-3-phospho-(1D-myo-inositol) + O2 = a 1-acyl-2-(15-hydroperoxy-5Z,8Z,11Z,13E-eicosatetraenoyl)-sn-glycero-3-phospho-(1D-myo-inositol). The catalysed reaction is a 1-acyl-2-(8Z,11Z,14Z-eicosatrienoyl)-sn-glycero-3-phospho-(1D-myo-inositol) + O2 = a 1-acyl-2-(15-hydroperoxy-8Z,11Z,13E-eicosatrienoyl)-sn-glycero-3-phospho-(1D-myo-inositol). It catalyses the reaction 1-octadecanoyl-2-(5Z,8Z,11Z,14Z)-eicosatetraenoyl-sn-glycero-3-phosphoethanolamine + O2 = 1-octadecanoyl-2-(15-hydroperoxy-5Z,8Z,11Z,13E-eicosatetraenoyl)-sn-glycero-3-phosphoethanolamine. It carries out the reaction 1-octadecanoyl-2-(5Z,8Z,11Z,14Z-eicosatetraenoyl)-sn-glycero-3-phospho-(1D-myo-inositol) + O2 = 1-octadecanoyl-2-(15-hydroperoxy-5Z,8Z,11Z,13E-eicosatetraenoyl)-sn-glycero-3-phospho-(1D-myo-inositol). The enzyme catalyses (8Z,11Z,14Z)-eicosatrienoate + O2 = 15-hydroperoxy-(8Z,11Z,13E)-eicosatrienoate. The catalysed reaction is (7S)-hydroperoxy-(4Z,8E,10Z,13Z,16Z,19Z)-docosahexaenoate + O2 = (7S,17S)-dihydroperoxy-(4Z,8E,10Z,13Z,15E,19Z)-docosahexaenoate. The protein operates within lipid metabolism; hydroperoxy eicosatetraenoic acid biosynthesis. In terms of biological role, non-heme iron-containing dioxygenase that catalyzes the stereo-specific peroxidation of free and esterified polyunsaturated fatty acids (PUFAs) generating a spectrum of bioactive lipid mediators. Inserts a peroxyl group at C15 of arachidonate ((5Z,8Z,11Z,14Z)-eicosatetraenoate) producing (15S)-hydroperoxyeicosatetraenoate/(15S)-HPETE. Also peroxidizes linoleate ((9Z,12Z)-octadecadienoate) to 13-hydroperoxyoctadecadienoate/13-HPODE. Oxygenates arachidonyl derivatives such as 2-arachidonoylglycerol (2-AG) leading to the production and extracellular release of 15-hydroxyeicosatetraenoyl glycerol (15-HETE-G) that acts as a peroxisome proliferator-activated receptor alpha agonist. Has the ability to efficiently class-switch ALOX5 pro-inflammatory mediators into anti-inflammatory intermediates. Participates in the sequential oxidations of DHA ((4Z,7Z,10Z,13Z,16Z,19Z)-docosahexaenoate) to generate specialized pro-resolving mediators (SPMs) resolvin D5 ((7S,17S)-diHPDHA), which can actively down-regulate the immune response and have anti-aggregation properties with platelets. In addition to free PUFAs hydrolyzed from phospholipids, it directly oxidizes PUFAs esterified to membrane-bound phospholipids. Has no detectable 8S-lipoxygenase activity on arachidonate but reacts with (8S)-HPETE to produce (8S,15S)-diHPETE. May regulate progression through the cell cycle and cell proliferation. May also regulate cytokine secretion by macrophages and therefore play a role in the immune response. May also regulate macrophage differentiation into proatherogenic foam cells. The chain is Polyunsaturated fatty acid lipoxygenase ALOX15B from Rattus norvegicus (Rat).